The primary structure comprises 404 residues: 4-hydroxyphenylpyruvate dioxygenase (404 aa).

VOC domains are found at residues glycine 28–arginine 163 and tyrosine 194–lysine 353. The Fe cation site is built by histidine 197, histidine 280, and glutamate 364.

Belongs to the 4HPPD family. Requires Fe cation as cofactor.

It carries out the reaction 3-(4-hydroxyphenyl)pyruvate + O2 = homogentisate + CO2. The protein operates within amino-acid degradation; L-phenylalanine degradation; acetoacetate and fumarate from L-phenylalanine: step 3/6. Functionally, key enzyme in the degradation of tyrosine. The protein is 4-hydroxyphenylpyruvate dioxygenase (TFA) of Tetrahymena thermophila.